A 416-amino-acid chain; its full sequence is Imidazolonepropionase (416 aa).

The Fe(3+) site is built by H81 and H83. Zn(2+)-binding residues include H81 and H83. 4-imidazolone-5-propanoate is bound by residues R90, Y153, and H186. An N-formimidoyl-L-glutamate-binding site is contributed by Y153. H251 provides a ligand contact to Fe(3+). H251 is a Zn(2+) binding site. 4-imidazolone-5-propanoate is bound at residue Q254. D326 provides a ligand contact to Fe(3+). D326 provides a ligand contact to Zn(2+). N-formimidoyl-L-glutamate contacts are provided by N328 and G330. 4-imidazolone-5-propanoate is bound at residue T331.

The protein belongs to the metallo-dependent hydrolases superfamily. HutI family. It depends on Zn(2+) as a cofactor. Fe(3+) serves as cofactor.

It localises to the cytoplasm. It catalyses the reaction 4-imidazolone-5-propanoate + H2O = N-formimidoyl-L-glutamate. The protein operates within amino-acid degradation; L-histidine degradation into L-glutamate; N-formimidoyl-L-glutamate from L-histidine: step 3/3. Its function is as follows. Catalyzes the hydrolytic cleavage of the carbon-nitrogen bond in imidazolone-5-propanoate to yield N-formimidoyl-L-glutamate. It is the third step in the universal histidine degradation pathway. The chain is Imidazolonepropionase from Paracidovorax citrulli (strain AAC00-1) (Acidovorax citrulli).